The primary structure comprises 115 residues: Large ribosomal subunit protein uL22 (115 aa).

It belongs to the universal ribosomal protein uL22 family. Part of the 50S ribosomal subunit.

Its function is as follows. This protein binds specifically to 23S rRNA; its binding is stimulated by other ribosomal proteins, e.g. L4, L17, and L20. It is important during the early stages of 50S assembly. It makes multiple contacts with different domains of the 23S rRNA in the assembled 50S subunit and ribosome. Functionally, the globular domain of the protein is located near the polypeptide exit tunnel on the outside of the subunit, while an extended beta-hairpin is found that lines the wall of the exit tunnel in the center of the 70S ribosome. This is Large ribosomal subunit protein uL22 from Lactococcus lactis subsp. lactis (strain IL1403) (Streptococcus lactis).